The sequence spans 255 residues: tRNA (guanine-N(1)-)-methyltransferase (255 aa).

Residues glycine 113 and 133–138 (IGDYVL) each bind S-adenosyl-L-methionine.

Belongs to the RNA methyltransferase TrmD family. As to quaternary structure, homodimer.

The protein localises to the cytoplasm. It carries out the reaction guanosine(37) in tRNA + S-adenosyl-L-methionine = N(1)-methylguanosine(37) in tRNA + S-adenosyl-L-homocysteine + H(+). Functionally, specifically methylates guanosine-37 in various tRNAs. This chain is tRNA (guanine-N(1)-)-methyltransferase, found in Shigella flexneri serotype 5b (strain 8401).